The primary structure comprises 177 residues: Translation initiation factor IF-3 (177 aa).

This sequence belongs to the IF-3 family. In terms of assembly, monomer.

The protein localises to the cytoplasm. Its function is as follows. IF-3 binds to the 30S ribosomal subunit and shifts the equilibrium between 70S ribosomes and their 50S and 30S subunits in favor of the free subunits, thus enhancing the availability of 30S subunits on which protein synthesis initiation begins. The chain is Translation initiation factor IF-3 from Elusimicrobium minutum (strain Pei191).